The primary structure comprises 116 residues: FK506-binding protein 1 (116 aa).

The 98-residue stretch at 19-116 (GDKVSIHYTG…IFEVELLKIN (98 aa)) folds into the PPIase FKBP-type domain.

This sequence belongs to the FKBP-type PPIase family. FKBP1 subfamily.

It is found in the cytoplasm. The enzyme catalyses [protein]-peptidylproline (omega=180) = [protein]-peptidylproline (omega=0). Inhibited by both FK506 and rapamycin. PPIases accelerate the folding of proteins. It catalyzes the cis-trans isomerization of proline imidic peptide bonds in oligopeptides. This Aspergillus oryzae (strain ATCC 42149 / RIB 40) (Yellow koji mold) protein is FK506-binding protein 1 (fpr1).